A 251-amino-acid polypeptide reads, in one-letter code: Triosephosphate isomerase (251 aa).

9–11 (NWK) is a binding site for substrate. H96 serves as the catalytic Electrophile. The active-site Proton acceptor is the E168. Residues G174, S214, and 235 to 236 (GG) contribute to the substrate site.

It belongs to the triosephosphate isomerase family. Homodimer.

The protein resides in the cytoplasm. It carries out the reaction D-glyceraldehyde 3-phosphate = dihydroxyacetone phosphate. The protein operates within carbohydrate biosynthesis; gluconeogenesis. It functions in the pathway carbohydrate degradation; glycolysis; D-glyceraldehyde 3-phosphate from glycerone phosphate: step 1/1. Its function is as follows. Involved in the gluconeogenesis. Catalyzes stereospecifically the conversion of dihydroxyacetone phosphate (DHAP) to D-glyceraldehyde-3-phosphate (G3P). The chain is Triosephosphate isomerase from Porphyromonas gingivalis (strain ATCC BAA-308 / W83).